A 180-amino-acid polypeptide reads, in one-letter code: UPF0134 protein MPN_368 (180 aa).

The protein belongs to the UPF0134 family.

This Mycoplasma pneumoniae (strain ATCC 29342 / M129 / Subtype 1) (Mycoplasmoides pneumoniae) protein is UPF0134 protein MPN_368.